Here is a 701-residue protein sequence, read N- to C-terminus: Elongation factor G (701 aa).

The 284-residue stretch at 8-291 (GRYRNIGIVA…AVIDYLPAPT (284 aa)) folds into the tr-type G domain. Residues 17-24 (AHVDAGKT), 89-93 (DTPGH), and 143-146 (NKMD) contribute to the GTP site.

Belongs to the TRAFAC class translation factor GTPase superfamily. Classic translation factor GTPase family. EF-G/EF-2 subfamily.

Its subcellular location is the cytoplasm. Its function is as follows. Catalyzes the GTP-dependent ribosomal translocation step during translation elongation. During this step, the ribosome changes from the pre-translocational (PRE) to the post-translocational (POST) state as the newly formed A-site-bound peptidyl-tRNA and P-site-bound deacylated tRNA move to the P and E sites, respectively. Catalyzes the coordinated movement of the two tRNA molecules, the mRNA and conformational changes in the ribosome. The protein is Elongation factor G of Pseudomonas syringae pv. syringae (strain B728a).